A 147-amino-acid chain; its full sequence is Histidine-containing phosphotransfer protein 1 (147 aa).

The HPt domain occupies 38-133 (APDFVSEVVT…YDLRNKFQAM (96 aa)). Phosphohistidine is present on histidine 79.

In terms of processing, two-component system major event consists of a His-to-Asp phosphorelay between a sensor histidine kinase (HK) and a response regulator (RR). In plants, the His-to-Asp phosphorelay involves an additional intermediate named Histidine-containing phosphotransfer protein (HPt). This multistep phosphorelay consists of a His-Asp-His-Asp sequential transfer of a phosphate group between first a His and an Asp of the HK protein, followed by the transfer to a conserved His of the HPt protein and finally the transfer to an Asp in the receiver domain of the RR protein. In terms of tissue distribution, widely expressed.

The protein resides in the cytoplasm. It is found in the cytosol. Its subcellular location is the nucleus. Functionally, functions as a two-component phosphorelay mediators between cytokinin sensor histidine kinases and response regulators (B-type ARRs). Plays an important role in propagating cytokinin signal transduction through the multistep His-to-Asp phosphorelay. Functions as a positive regulator of the cytokinin signaling pathway. May play a regulatory role in salt and drought tolerance during plant development. This Oryza sativa subsp. japonica (Rice) protein is Histidine-containing phosphotransfer protein 1.